The primary structure comprises 368 residues: Probable dual-specificity RNA methyltransferase RlmN (368 aa).

E100 serves as the catalytic Proton acceptor. In terms of domain architecture, Radical SAM core spans 106 to 344; the sequence is QHYGLSVCVT…CVVRQEHGTD (239 aa). An intrachain disulfide couples C113 to C349. C120, C124, and C127 together coordinate [4Fe-4S] cluster. S-adenosyl-L-methionine-binding positions include 172–173, S204, 227–229, and N305; these read GE and SLH. C349 (S-methylcysteine intermediate) is an active-site residue.

This sequence belongs to the radical SAM superfamily. RlmN family. It depends on [4Fe-4S] cluster as a cofactor.

It is found in the cytoplasm. It catalyses the reaction adenosine(2503) in 23S rRNA + 2 reduced [2Fe-2S]-[ferredoxin] + 2 S-adenosyl-L-methionine = 2-methyladenosine(2503) in 23S rRNA + 5'-deoxyadenosine + L-methionine + 2 oxidized [2Fe-2S]-[ferredoxin] + S-adenosyl-L-homocysteine. It carries out the reaction adenosine(37) in tRNA + 2 reduced [2Fe-2S]-[ferredoxin] + 2 S-adenosyl-L-methionine = 2-methyladenosine(37) in tRNA + 5'-deoxyadenosine + L-methionine + 2 oxidized [2Fe-2S]-[ferredoxin] + S-adenosyl-L-homocysteine. Specifically methylates position 2 of adenine 2503 in 23S rRNA and position 2 of adenine 37 in tRNAs. This Streptococcus agalactiae serotype Ia (strain ATCC 27591 / A909 / CDC SS700) protein is Probable dual-specificity RNA methyltransferase RlmN.